Consider the following 183-residue polypeptide: Adenine phosphoribosyltransferase (183 aa).

It belongs to the purine/pyrimidine phosphoribosyltransferase family. Homodimer.

The protein resides in the cytoplasm. It carries out the reaction AMP + diphosphate = 5-phospho-alpha-D-ribose 1-diphosphate + adenine. The protein operates within purine metabolism; AMP biosynthesis via salvage pathway; AMP from adenine: step 1/1. Its function is as follows. Catalyzes a salvage reaction resulting in the formation of AMP, that is energically less costly than de novo synthesis. This chain is Adenine phosphoribosyltransferase, found in Salmonella paratyphi C (strain RKS4594).